A 24-amino-acid chain; its full sequence is Waglerin-3 (24 aa).

Positions 1–10 (SLGGKPDLRP) are enriched in basic and acidic residues. Residues 1 to 24 (SLGGKPDLRPCHPPCHYIPRPKPR) form a disordered region. The cysteines at positions 11 and 15 are disulfide-linked.

This sequence belongs to the waglerin family. In terms of assembly, waglerin-1 is monomeric. Amidation of the waglerin-1 C-terminus increases the affinity by 2-fold. In terms of tissue distribution, expressed by the venom gland.

It localises to the secreted. Waglerin-1 selectively blocks the epsilon subunit of muscle nicotinic acetylcholine receptor (nAChR). Also has effects on rodent ionotropic GABA(A) receptors (GABR), since it potentiates I(GABA) in some neurons and depresses I(GABA) in others. In mice, it elicits tachypnea, ocular proptosis, rapid collapse and spasms, whereas no toxic effects on respiration and blood pressure are observed in rats. In terms of biological role, waglerin-3 selectively blocks the epsilon subunit of muscle nicotinic acetylcholine receptor (nAChR). It elicits tachypnea, ocular proptosis, rapid collapse and spasms in mice. It causes death by respiratory failure. The polypeptide is Waglerin-3 (Tropidolaemus wagleri (Wagler's pit viper)).